Here is a 1875-residue protein sequence, read N- to C-terminus: Soluble starch synthase 3a, chloroplastic/amyloplastic (1875 aa).

The N-terminal 49 residues, 1–49, are a transit peptide targeting the chloroplast; it reads MEMALRPQSLLCPRSRLKVVIRPASSASGGGLAQYFLMTRRYTGSRIVR. A coiled-coil region spans residues 1007-1065; that stretch reads KRELERVATEEAERRRHAEEQQRMGEQRAAEQAAREQAKKEIELKKNKLQNLLSSARTH. The segment at 1014 to 1043 is disordered; it reads ATEEAERRRHAEEQQRMGEQRAAEQAAREQ.

It belongs to the glycosyltransferase 1 family. Bacterial/plant glycogen synthase subfamily. As to expression, expressed in the endosperm.

It localises to the plastid. It is found in the chloroplast. Its subcellular location is the amyloplast. The catalysed reaction is [(1-&gt;4)-alpha-D-glucosyl](n) + ADP-alpha-D-glucose = [(1-&gt;4)-alpha-D-glucosyl](n+1) + ADP + H(+). Its pathway is glycan biosynthesis; starch biosynthesis. Involved in starch synthesis in endosperm amyloplasts. Plays an important role in the elongation of amylopectin B chains. This Oryza sativa subsp. japonica (Rice) protein is Soluble starch synthase 3a, chloroplastic/amyloplastic.